We begin with the raw amino-acid sequence, 664 residues long: UvrABC system protein B (664 aa).

The Helicase ATP-binding domain occupies 23–412; sequence EGLNRGMRFQ…VVEQIIRPTG (390 aa). 36 to 43 serves as a coordination point for ATP; that stretch reads GVTGSGKT. A Beta-hairpin motif is present at residues 89–112; that stretch reads YYDYYQPEAYIPTKDLYIEKNADI. The region spanning 429-588 is the Helicase C-terminal domain; that stretch reads DLVNEIVKVK…ITPRSVIKPL (160 aa). In terms of domain architecture, UVR spans 622 to 657; that stretch reads EEYMAVLEEEMYRAASELRYEDAAALRDELFRIREE.

The protein belongs to the UvrB family. In terms of assembly, forms a heterotetramer with UvrA during the search for lesions. Interacts with UvrC in an incision complex.

The protein resides in the cytoplasm. The UvrABC repair system catalyzes the recognition and processing of DNA lesions. A damage recognition complex composed of 2 UvrA and 2 UvrB subunits scans DNA for abnormalities. Upon binding of the UvrA(2)B(2) complex to a putative damaged site, the DNA wraps around one UvrB monomer. DNA wrap is dependent on ATP binding by UvrB and probably causes local melting of the DNA helix, facilitating insertion of UvrB beta-hairpin between the DNA strands. Then UvrB probes one DNA strand for the presence of a lesion. If a lesion is found the UvrA subunits dissociate and the UvrB-DNA preincision complex is formed. This complex is subsequently bound by UvrC and the second UvrB is released. If no lesion is found, the DNA wraps around the other UvrB subunit that will check the other stand for damage. This chain is UvrABC system protein B, found in Thermotoga maritima (strain ATCC 43589 / DSM 3109 / JCM 10099 / NBRC 100826 / MSB8).